Reading from the N-terminus, the 1586-residue chain is Zinc finger protein GLI2 (1586 aa).

The span at 1-10 (METSASATAS) shows a compositional bias: polar residues. The tract at residues 1-22 (METSASATASEKQEAKSGILEA) is disordered. Val-50 participates in a covalent cross-link: Glycyl lysine isopeptide (Lys-Gly) (interchain with G-Cter in SUMO2). Residues Ser-149, Ser-234, Ser-236, and Ser-242 each carry the phosphoserine modification. The span at 342 to 367 (SSSSNCLSDTNQNKQSSESAVSSTVN) shows a compositional bias: polar residues. A disordered region spans residues 342–389 (SSSSNCLSDTNQNKQSSESAVSSTVNPVAIHKRSKVKTEPEGLRPASP). Residue Ser-388 is modified to Phosphoserine; by DYRK2. A C2H2-type 1 zinc finger spans residues 437–464 (TNCHWEDCTKEYDTQEQLVHHINNEHIH). The C2H2-type 2; degenerate zinc-finger motif lies at 475–497 (QACTREQKPFKAQYMLVVHMRRH). 3 consecutive C2H2-type zinc fingers follow at residues 503 to 527 (HKCT…LRSH), 533 to 558 (YVCE…NRTH), and 564 to 589 (YICK…KTVH). Disordered regions lie at residues 577–636 (DPSS…TSQA) and 650–716 (SSGL…SAGG). The segment covering 589–605 (HGPDAHVTKKQRNDVHL) has biased composition (basic and acidic residues). Low complexity predominate over residues 654 to 674 (CQSSPGAQSSCSSEPSPLGSA). Thr-725 carries the post-translational modification Phosphothreonine. Disordered regions lie at residues 742-879 (DSCS…SGLL), 925-1030 (RTLP…RPPS), 1182-1215 (QYPG…PSQG), 1421-1441 (MGNM…GAPD), and 1469-1498 (MRSQ…QVSS). At Lys-757 the chain carries N6-acetyllysine; by EP300. A compositionally biased stretch (polar residues) spans 791-802 (LSASEVTMLSQL). Composition is skewed to low complexity over residues 809 to 824 (STST…RRSS) and 947 to 961 (GHGH…PHEA). Over residues 968-977 (RASDPVRRPD) the composition is skewed to basic and acidic residues. Phosphoserine; by DYRK2 is present on Ser-1011. Residues 1469-1485 (MRSQPPQPQACQDSIQP) show a composition bias toward polar residues.

This sequence belongs to the GLI C2H2-type zinc-finger protein family. In terms of assembly, interaction with ZIC1 and ZIC2. Interacts with STK36. Interacts with SUFU; this inhibits transcriptional activation mediated by GLI2. Interacts (via C-terminal internal region) with FOXC1 (via N-terminus); this interaction is direct and increases GLI2 DNA-binding and transcriptional activity through a smoothened (SMO)-independent Hedgehog (Hh) signaling pathway. Post-translationally, phosphorylated in vitro by ULK3. Phosphorylated by DYRK2; this inhibits GLI2 transcription factor activity and promotes proteasomal degradation of GLI2. Acetylation at Lys-757 inhibits Hh target gene expression, probably by impeding entry into chromatin thus preventing promoter occupancy. In terms of tissue distribution, expressed in breast cancers (at protein level). Isoform 1 and isoform 4 are expressed in HTLV-1-infected T-cell lines (at protein level). Isoform 1 and isoform 2 are strongly expressed in HTLV-1-infected T-cell lines. Isoform 3 and isoform 4 are weakly expressed in HTLV-1-infected T-cell lines.

It localises to the nucleus. The protein localises to the cytoplasm. The protein resides in the cell projection. It is found in the cilium. Functions as a transcription regulator in the hedgehog (Hh) pathway. Functions as a transcriptional activator. May also function as transcriptional repressor. Requires STK36 for full transcriptional activator activity. Required for normal embryonic development. In terms of biological role, involved in the smoothened (SHH) signaling pathway. Its function is as follows. Acts as a transcriptional activator in T-cell leukemia virus type 1 (HTLV-1)-infected cells in a Tax-dependent manner. Binds to the DNA sequence 5'-GAACCACCCA-3' which is part of the Tax-responsive element (TRE-2S) regulatory element that augments the Tax-dependent enhancer of HTLV-1. Functionally, (Microbial infection) Acts as a transcriptional activators in T-cell leukemia virus type 1 (HTLV-1)-infected cells in a Tax-dependent manner. Binds to the DNA sequence 5'-GAACCACCCA-3' which is part of the Tax-responsive element (TRE-2S) regulatory element that augments the Tax-dependent enhancer of HTLV-1. Acts as a transcriptional repressor. The polypeptide is Zinc finger protein GLI2 (Homo sapiens (Human)).